The sequence spans 702 residues: Elongation factor G 1 (702 aa).

One can recognise a tr-type G domain in the interval 8-290 (ERYRNIGISA…AVIDFLPSPV (283 aa)). Residues 17–24 (AHIDAGKT), 88–92 (DTPGH), and 142–145 (NKMD) each bind GTP.

The protein belongs to the TRAFAC class translation factor GTPase superfamily. Classic translation factor GTPase family. EF-G/EF-2 subfamily.

The protein resides in the cytoplasm. In terms of biological role, catalyzes the GTP-dependent ribosomal translocation step during translation elongation. During this step, the ribosome changes from the pre-translocational (PRE) to the post-translocational (POST) state as the newly formed A-site-bound peptidyl-tRNA and P-site-bound deacylated tRNA move to the P and E sites, respectively. Catalyzes the coordinated movement of the two tRNA molecules, the mRNA and conformational changes in the ribosome. This chain is Elongation factor G 1, found in Cupriavidus pinatubonensis (strain JMP 134 / LMG 1197) (Cupriavidus necator (strain JMP 134)).